Here is a 154-residue protein sequence, read N- to C-terminus: Myoglobin (154 aa).

Residues 2–148 (GLSDQEWQQV…FRNDMASKYK (147 aa)) form the Globin domain. His65 contacts nitrite. An O2-binding site is contributed by His65. A heme b-binding site is contributed by His94.

It belongs to the globin family. In terms of assembly, monomeric.

It localises to the cytoplasm. The protein resides in the sarcoplasm. The catalysed reaction is Fe(III)-heme b-[protein] + nitric oxide + H2O = Fe(II)-heme b-[protein] + nitrite + 2 H(+). The enzyme catalyses H2O2 + AH2 = A + 2 H2O. In terms of biological role, monomeric heme protein which primary function is to store oxygen and facilitate its diffusion within muscle tissues. Reversibly binds oxygen through a pentacoordinated heme iron and enables its timely and efficient release as needed during periods of heightened demand. Depending on the oxidative conditions of tissues and cells, and in addition to its ability to bind oxygen, it also has a nitrite reductase activity whereby it regulates the production of bioactive nitric oxide. Under stress conditions, like hypoxia and anoxia, it also protects cells against reactive oxygen species thanks to its pseudoperoxidase activity. This is Myoglobin (MB) from Anas poecilorhyncha (Indian spot-billed duck).